The sequence spans 194 residues: Dof zinc finger protein DOF1.7 (194 aa).

The segment at 33-87 (LKCPRCDSPNTKFCYYNNYNLSQPRHFCKNCRRYWTKGGALRNIPVGGGTRKSNK) adopts a Dof-type zinc-finger fold. Cysteine 35, cysteine 38, cysteine 60, and cysteine 63 together coordinate Zn(2+). The tract at residues 74-125 (RNIPVGGGTRKSNKRSGSSPSSNLKNQTVAEKPDHHGSGSEEKEERVSGQEM) is disordered. Residues 88-99 (RSGSSPSSNLKN) show a composition bias toward low complexity. Residues 104–121 (EKPDHHGSGSEEKEERVS) are compositionally biased toward basic and acidic residues.

It is found in the nucleus. Transcription factor that binds specifically to a 5'-AA[AG]G-3' consensus core sequence. The sequence is that of Dof zinc finger protein DOF1.7 (DOF1.7) from Arabidopsis thaliana (Mouse-ear cress).